Reading from the N-terminus, the 228-residue chain is NAD(P)H-hydrate epimerase (228 aa).

One can recognise a YjeF N-terminal domain in the interval 9 to 209 (VRAVERLAHR…LLGLTPAFLA (201 aa)). 53–57 (NNGGD) provides a ligand contact to (6S)-NADPHX. Positions 54 and 115 each coordinate K(+). (6S)-NADPHX is bound by residues 119–125 (GIGLARP) and Asp-148. Ser-151 provides a ligand contact to K(+).

This sequence belongs to the NnrE/AIBP family. K(+) serves as cofactor.

The catalysed reaction is (6R)-NADHX = (6S)-NADHX. It carries out the reaction (6R)-NADPHX = (6S)-NADPHX. Its function is as follows. Catalyzes the epimerization of the S- and R-forms of NAD(P)HX, a damaged form of NAD(P)H that is a result of enzymatic or heat-dependent hydration. This is a prerequisite for the S-specific NAD(P)H-hydrate dehydratase to allow the repair of both epimers of NAD(P)HX. The chain is NAD(P)H-hydrate epimerase from Bordetella parapertussis (strain 12822 / ATCC BAA-587 / NCTC 13253).